A 176-amino-acid polypeptide reads, in one-letter code: Probable chorismate pyruvate-lyase (176 aa).

3 residues coordinate substrate: R70, L108, and E166.

This sequence belongs to the UbiC family.

The protein resides in the cytoplasm. The enzyme catalyses chorismate = 4-hydroxybenzoate + pyruvate. Its pathway is cofactor biosynthesis; ubiquinone biosynthesis. Removes the pyruvyl group from chorismate, with concomitant aromatization of the ring, to provide 4-hydroxybenzoate (4HB) for the ubiquinone pathway. The protein is Probable chorismate pyruvate-lyase of Dechloromonas aromatica (strain RCB).